Consider the following 214-residue polypeptide: MRIILLGAPGAGKGTQAQFIMEKYGIPQISTGDMLRAAVKAGSELGLKAKEIMDAGKLVTDELVIALVKERITAEDCRNGFLLDGFPRTIPQADAMKEAGIKVDNVLEFDVPDELIVERIVGRRVHAPSGRVYHVTFNPPRVEGKDDMTGEELTTRKDDQEETVRKRLVEYHQMTAPLIAYYSKEAAAGNTAYHKIDGTRKVTEVSAELATILG.

10 to 15 (GAGKGT) is an ATP binding site. An NMP region spans residues 30-59 (STGDMLRAAVKAGSELGLKAKEIMDAGKLV). Residues threonine 31, arginine 36, 57–59 (KLV), 85–88 (GFPR), and glutamine 92 each bind AMP. The segment at 122–159 (GRRVHAPSGRVYHVTFNPPRVEGKDDMTGEELTTRKDD) is LID. ATP is bound by residues arginine 123 and 132 to 133 (VY). Arginine 156 and arginine 167 together coordinate AMP. An ATP-binding site is contributed by arginine 200.

It belongs to the adenylate kinase family. Monomer.

Its subcellular location is the cytoplasm. It carries out the reaction AMP + ATP = 2 ADP. It functions in the pathway purine metabolism; AMP biosynthesis via salvage pathway; AMP from ADP: step 1/1. Functionally, catalyzes the reversible transfer of the terminal phosphate group between ATP and AMP. Plays an important role in cellular energy homeostasis and in adenine nucleotide metabolism. This is Adenylate kinase from Erwinia tasmaniensis (strain DSM 17950 / CFBP 7177 / CIP 109463 / NCPPB 4357 / Et1/99).